We begin with the raw amino-acid sequence, 167 residues long: 3-isopropylmalate dehydratase small subunit (167 aa).

This sequence belongs to the LeuD family. LeuD type 2 subfamily. In terms of assembly, heterodimer of LeuC and LeuD.

It catalyses the reaction (2R,3S)-3-isopropylmalate = (2S)-2-isopropylmalate. Its pathway is amino-acid biosynthesis; L-leucine biosynthesis; L-leucine from 3-methyl-2-oxobutanoate: step 2/4. Functionally, catalyzes the isomerization between 2-isopropylmalate and 3-isopropylmalate, via the formation of 2-isopropylmaleate. The sequence is that of 3-isopropylmalate dehydratase small subunit from Nitratidesulfovibrio vulgaris (strain ATCC 29579 / DSM 644 / CCUG 34227 / NCIMB 8303 / VKM B-1760 / Hildenborough) (Desulfovibrio vulgaris).